The chain runs to 103 residues: Large ribosomal subunit protein bL21 (103 aa).

It belongs to the bacterial ribosomal protein bL21 family. Part of the 50S ribosomal subunit. Contacts protein L20.

Functionally, this protein binds to 23S rRNA in the presence of protein L20. This Haemophilus ducreyi (strain 35000HP / ATCC 700724) protein is Large ribosomal subunit protein bL21.